The sequence spans 355 residues: UDP-N-acetylglucosamine--N-acetylmuramyl-(pentapeptide) pyrophosphoryl-undecaprenol N-acetylglucosamine transferase (355 aa).

Residues threonine 14–glycine 16, asparagine 126, arginine 162, serine 190, isoleucine 243, alanine 262–glutamate 267, and glutamine 287 contribute to the UDP-N-acetyl-alpha-D-glucosamine site.

This sequence belongs to the glycosyltransferase 28 family. MurG subfamily.

Its subcellular location is the cell inner membrane. It carries out the reaction di-trans,octa-cis-undecaprenyl diphospho-N-acetyl-alpha-D-muramoyl-L-alanyl-D-glutamyl-meso-2,6-diaminopimeloyl-D-alanyl-D-alanine + UDP-N-acetyl-alpha-D-glucosamine = di-trans,octa-cis-undecaprenyl diphospho-[N-acetyl-alpha-D-glucosaminyl-(1-&gt;4)]-N-acetyl-alpha-D-muramoyl-L-alanyl-D-glutamyl-meso-2,6-diaminopimeloyl-D-alanyl-D-alanine + UDP + H(+). It functions in the pathway cell wall biogenesis; peptidoglycan biosynthesis. Cell wall formation. Catalyzes the transfer of a GlcNAc subunit on undecaprenyl-pyrophosphoryl-MurNAc-pentapeptide (lipid intermediate I) to form undecaprenyl-pyrophosphoryl-MurNAc-(pentapeptide)GlcNAc (lipid intermediate II). This is UDP-N-acetylglucosamine--N-acetylmuramyl-(pentapeptide) pyrophosphoryl-undecaprenol N-acetylglucosamine transferase from Vibrio vulnificus (strain CMCP6).